A 583-amino-acid chain; its full sequence is Aspartate--tRNA ligase (583 aa).

Glu-174 is a binding site for L-aspartate. An aspartate region spans residues 198-201 (QITK). L-aspartate is bound at residue Arg-220. ATP is bound by residues 220 to 222 (RDE) and Gln-229. His-443 provides a ligand contact to L-aspartate. Glu-477 contributes to the ATP binding site. Residue Arg-484 coordinates L-aspartate. 529–532 (GLDR) is an ATP binding site.

Belongs to the class-II aminoacyl-tRNA synthetase family. Type 1 subfamily. Homodimer.

It is found in the cytoplasm. The enzyme catalyses tRNA(Asp) + L-aspartate + ATP = L-aspartyl-tRNA(Asp) + AMP + diphosphate. Catalyzes the attachment of L-aspartate to tRNA(Asp) in a two-step reaction: L-aspartate is first activated by ATP to form Asp-AMP and then transferred to the acceptor end of tRNA(Asp). This chain is Aspartate--tRNA ligase, found in Streptococcus suis (strain 98HAH33).